Consider the following 167-residue polypeptide: Photosystem I assembly protein Ycf3 (167 aa).

3 TPR repeats span residues 35 to 68 (AFSYYRDGMSAQSEGEYAEALANYYEALNLEEDP), 72 to 105 (SFILYNIGLIHASNGEYVKALDYYHKALEANNKL), and 120 to 153 (AVKASEINDLETAQALFHEAAQYWKQAIKLAPSN).

It belongs to the Ycf3 family.

The protein localises to the plastid. It is found in the chloroplast thylakoid membrane. In terms of biological role, essential for the assembly of the photosystem I (PSI) complex. May act as a chaperone-like factor to guide the assembly of the PSI subunits. The protein is Photosystem I assembly protein Ycf3 of Galdieria sulphuraria (Red alga).